A 56-amino-acid polypeptide reads, in one-letter code: UPF0391 membrane protein Jann_3570 (56 aa).

2 helical membrane passes run 4-24 and 29-48; these read WAVT…GGIA and GIAQ…SLVA.

This sequence belongs to the UPF0391 family.

The protein localises to the cell membrane. This is UPF0391 membrane protein Jann_3570 from Jannaschia sp. (strain CCS1).